The chain runs to 476 residues: tRNA(Ile)-lysidine synthase (476 aa).

30 to 35 (SGGPDS) contributes to the ATP binding site.

This sequence belongs to the tRNA(Ile)-lysidine synthase family.

It localises to the cytoplasm. The catalysed reaction is cytidine(34) in tRNA(Ile2) + L-lysine + ATP = lysidine(34) in tRNA(Ile2) + AMP + diphosphate + H(+). Ligates lysine onto the cytidine present at position 34 of the AUA codon-specific tRNA(Ile) that contains the anticodon CAU, in an ATP-dependent manner. Cytidine is converted to lysidine, thus changing the amino acid specificity of the tRNA from methionine to isoleucine. The chain is tRNA(Ile)-lysidine synthase from Bacillus cereus (strain ATCC 10987 / NRS 248).